Here is a 258-residue protein sequence, read N- to C-terminus: Ribosomal RNA small subunit methyltransferase A (258 aa).

Histidine 13, leucine 15, glycine 40, glutamate 62, aspartate 87, and asparagine 108 together coordinate S-adenosyl-L-methionine.

This sequence belongs to the class I-like SAM-binding methyltransferase superfamily. rRNA adenine N(6)-methyltransferase family. RsmA subfamily.

The protein resides in the cytoplasm. It catalyses the reaction adenosine(1518)/adenosine(1519) in 16S rRNA + 4 S-adenosyl-L-methionine = N(6)-dimethyladenosine(1518)/N(6)-dimethyladenosine(1519) in 16S rRNA + 4 S-adenosyl-L-homocysteine + 4 H(+). Functionally, specifically dimethylates two adjacent adenosines (A1518 and A1519) in the loop of a conserved hairpin near the 3'-end of 16S rRNA in the 30S particle. May play a critical role in biogenesis of 30S subunits. The protein is Ribosomal RNA small subunit methyltransferase A of Sulfurihydrogenibium sp. (strain YO3AOP1).